The sequence spans 166 residues: UPF0304 protein VP0990 (166 aa).

It belongs to the UPF0304 family.

In Vibrio parahaemolyticus serotype O3:K6 (strain RIMD 2210633), this protein is UPF0304 protein VP0990.